The primary structure comprises 462 residues: UDP-N-acetylmuramate--L-alanine ligase (462 aa).

114 to 120 provides a ligand contact to ATP; the sequence is GSHGKTT.

The protein belongs to the MurCDEF family.

Its subcellular location is the cytoplasm. It carries out the reaction UDP-N-acetyl-alpha-D-muramate + L-alanine + ATP = UDP-N-acetyl-alpha-D-muramoyl-L-alanine + ADP + phosphate + H(+). It participates in cell wall biogenesis; peptidoglycan biosynthesis. In terms of biological role, cell wall formation. This chain is UDP-N-acetylmuramate--L-alanine ligase, found in Brachyspira hyodysenteriae (strain ATCC 49526 / WA1).